The sequence spans 329 residues: Ribonucleoside-diphosphate reductase small chain (329 aa).

Fe cation-binding residues include aspartate 75, glutamate 106, and histidine 109. Tyrosine 113 is an active-site residue. The Fe cation site is built by glutamate 168, glutamate 202, and histidine 205.

The protein belongs to the ribonucleoside diphosphate reductase small chain family. In terms of assembly, heterodimer of a large and a small chain. It depends on Fe cation as a cofactor.

It localises to the cytoplasm. It catalyses the reaction a 2'-deoxyribonucleoside 5'-diphosphate + [thioredoxin]-disulfide + H2O = a ribonucleoside 5'-diphosphate + [thioredoxin]-dithiol. Its function is as follows. Provides the precursors necessary for DNA synthesis. Catalyzes the biosynthesis of deoxyribonucleotides from the corresponding ribonucleotides. This Nicotiana tabacum (Common tobacco) protein is Ribonucleoside-diphosphate reductase small chain.